Reading from the N-terminus, the 160-residue chain is MEEGSSSPVSPVDSLGTSEEELERQPKRFGRKRRYSKKSSEDGSPTPGKRGKKGSPSAQSFEELQSQRILANVRERQRTQSLNEAFAALRKIIPTLPSDKLSKIQTLKLAARYIDFLYQVLQSDEMDNKMTSCSYVAHERLSYAYSVWRMEGAWSMSASH.

Residues 1–63 are disordered; it reads MEEGSSSPVS…GSPSAQSFEE (63 aa). Residues 27–37 are compositionally biased toward basic residues; it reads KRFGRKRRYSK. The bHLH domain occupies 66–117; the sequence is SQRILANVRERQRTQSLNEAFAALRKIIPTLPSDKLSKIQTLKLAARYIDFL.

In terms of assembly, efficient DNA binding requires dimerization with another bHLH protein. Forms a heterodimer with TCF3/E12. Also interacts with MEF2C. As to expression, expressed at low levels in sclerotome and dermatome of somites, and in limb buds at 10.5 dpc. Accumulates predominantly in dermatome, prevertebrae and derivatives of branchial arches by 13 dpc. Also expressed near surface of embryo and in chondrogenic cells. In adult, expressed at low levels in skin, bladder, uterus, aorta and heart.

The protein resides in the nucleus. It is found in the cytoplasm. Binds to the E-box consensus sequence 5'-CANNTG-3' as a heterodimer and inhibits transcriptional activation by MYOD1, MYOG, MEF2A and MEF2C. Also represses expression of pro-inflammatory cytokines such as TNFA and IL1B. Involved in postnatal glycogen storage and energy metabolism. Inhibits the premature or ectopic differentiation of preosteoblast cells during osteogenesis, possibly by changing the internal signal transduction response of osteoblasts to external growth factors. The polypeptide is Twist-related protein 2 (Twist2) (Mus musculus (Mouse)).